A 353-amino-acid chain; its full sequence is Photosystem II protein D1 (353 aa).

An N-acetylthreonine modification is found at threonine 2. Threonine 2 carries the phosphothreonine modification. A run of 3 helical transmembrane segments spans residues 29–46 (YIGW…TATS), 118–133 (HFLL…EWEL), and 142–156 (WIAV…AATA). Histidine 118 provides a ligand contact to chlorophyll a. Tyrosine 126 serves as a coordination point for pheophytin a. [CaMn4O5] cluster-binding residues include aspartate 170 and glutamate 189. A helical transmembrane segment spans residues 197–218 (FHMLGVAGVFGGSLFSAMHGSL). Histidine 198 is a chlorophyll a binding site. A quinone-binding positions include histidine 215 and 264-265 (SF). Residue histidine 215 coordinates Fe cation. Fe cation is bound at residue histidine 272. Residues 274-288 (FLAAWPVVGIWFTAL) traverse the membrane as a helical segment. Histidine 332, glutamate 333, aspartate 342, and alanine 344 together coordinate [CaMn4O5] cluster. Residues 345 to 353 (AVEAPSING) constitute a propeptide that is removed on maturation.

It belongs to the reaction center PufL/M/PsbA/D family. As to quaternary structure, PSII is composed of 1 copy each of membrane proteins PsbA, PsbB, PsbC, PsbD, PsbE, PsbF, PsbH, PsbI, PsbJ, PsbK, PsbL, PsbM, PsbT, PsbX, PsbY, PsbZ, Psb30/Ycf12, at least 3 peripheral proteins of the oxygen-evolving complex and a large number of cofactors. It forms dimeric complexes. The D1/D2 heterodimer binds P680, chlorophylls that are the primary electron donor of PSII, and subsequent electron acceptors. It shares a non-heme iron and each subunit binds pheophytin, quinone, additional chlorophylls, carotenoids and lipids. D1 provides most of the ligands for the Mn4-Ca-O5 cluster of the oxygen-evolving complex (OEC). There is also a Cl(-1) ion associated with D1 and D2, which is required for oxygen evolution. The PSII complex binds additional chlorophylls, carotenoids and specific lipids. is required as a cofactor. Tyr-161 forms a radical intermediate that is referred to as redox-active TyrZ, YZ or Y-Z. In terms of processing, C-terminally processed by CTPA; processing is essential to allow assembly of the oxygen-evolving complex and thus photosynthetic growth.

The protein localises to the plastid. Its subcellular location is the chloroplast thylakoid membrane. The enzyme catalyses 2 a plastoquinone + 4 hnu + 2 H2O = 2 a plastoquinol + O2. Functionally, photosystem II (PSII) is a light-driven water:plastoquinone oxidoreductase that uses light energy to abstract electrons from H(2)O, generating O(2) and a proton gradient subsequently used for ATP formation. It consists of a core antenna complex that captures photons, and an electron transfer chain that converts photonic excitation into a charge separation. The D1/D2 (PsbA/PsbD) reaction center heterodimer binds P680, the primary electron donor of PSII as well as several subsequent electron acceptors. The polypeptide is Photosystem II protein D1 (Medicago sativa (Alfalfa)).